The chain runs to 151 residues: Probable chemoreceptor glutamine deamidase CheD (151 aa).

The protein belongs to the CheD family.

The catalysed reaction is L-glutaminyl-[protein] + H2O = L-glutamyl-[protein] + NH4(+). Its function is as follows. Probably deamidates glutamine residues to glutamate on methyl-accepting chemotaxis receptors (MCPs), playing an important role in chemotaxis. This is Probable chemoreceptor glutamine deamidase CheD from Methanosarcina barkeri (strain Fusaro / DSM 804).